We begin with the raw amino-acid sequence, 84 residues long: Cell division topological specificity factor (84 aa).

This sequence belongs to the MinE family.

Prevents the cell division inhibition by proteins MinC and MinD at internal division sites while permitting inhibition at polar sites. This ensures cell division at the proper site by restricting the formation of a division septum at the midpoint of the long axis of the cell. In Pseudomonas fluorescens (strain Pf0-1), this protein is Cell division topological specificity factor.